The primary structure comprises 125 residues: Homeobox protein HD-8 (125 aa).

The homeobox DNA-binding region spans 30–89 (EPDTRTRKTTFQMMVLKEVFKIAPHPSTLTKADLALMIKLPLKAVQIWFQNERSRKERGG).

Its subcellular location is the nucleus. This chain is Homeobox protein HD-8 (HD-8), found in Encephalitozoon cuniculi (strain GB-M1) (Microsporidian parasite).